The chain runs to 432 residues: uncharacterized protein (432 aa).

SIS domains follow at residues 105–244 (WLTE…DLVS) and 277–422 (CDKK…VDLP).

This is an uncharacterized protein from Saccharomyces cerevisiae (strain Lalvin EC1118 / Prise de mousse) (Baker's yeast).